We begin with the raw amino-acid sequence, 71 residues long: Hainantoxin-X-2 (71 aa).

An N-terminal signal peptide occupies residues 1 to 26 (MKTAIFTVVLALAVFAVLCLVVSTHA). A propeptide spanning residues 27 to 43 (ERHSKTDMEDSPMIQER) is cleaved from the precursor. 2 disulfide bridges follow: cysteine 52–cysteine 65 and cysteine 61–cysteine 70.

Belongs to the neurotoxin 36 family. 02 subfamily. In terms of tissue distribution, expressed by the venom gland.

The protein resides in the secreted. Functionally, reversibly blocks N-type calcium channels (Cav2.2/CACNA1B) in rat dorsal root ganglion cells. Elicits no toxic symptoms in either vertebrates or invertebrates during a period of 48 hours post-injection, when it was assayed in vivo by direct injection into mice and cockroaches. The sequence is that of Hainantoxin-X-2 from Cyriopagopus hainanus (Chinese bird spider).